The primary structure comprises 1473 residues: G8 domain-containing protein DDB_G0286311 (1473 aa).

The signal sequence occupies residues 1–21; sequence MKRFFIVILFILLVCIFNVKS. Residues 105–125 traverse the membrane as a helical segment; it reads IVLMIATITGSLLFIRFNIGF. Asn-126 is a glycosylation site (N-linked (GlcNAc...) asparagine). The chain crosses the membrane as a helical span at residues 130-150; the sequence is TLIILIIGTIFLIGSSHSITL. Residues Asn-203, Asn-241, and Asn-275 are each glycosylated (N-linked (GlcNAc...) asparagine). Residues 298-375 show a composition bias toward low complexity; sequence TGTTPTTTPT…PTTTPTTTPT (78 aa). Positions 298–400 are disordered; it reads TGTTPTTTPT…SSSPSSPSFS (103 aa). The span at 376 to 389 shows a compositional bias: polar residues; that stretch reads DSCPTTSTWRPTMA. Residues 390–400 show a composition bias toward low complexity; that stretch reads SSSSPSSPSFS. 10 N-linked (GlcNAc...) asparagine glycosylation sites follow: Asn-444, Asn-637, Asn-680, Asn-1078, Asn-1088, Asn-1176, Asn-1206, Asn-1225, Asn-1389, and Asn-1424. Residues 626-754 enclose the G8 domain; it reads SIWSSGIVPL…YHNTWSKLST (129 aa).

Belongs to the comF family.

The protein resides in the membrane. In Dictyostelium discoideum (Social amoeba), this protein is G8 domain-containing protein DDB_G0286311.